The following is a 282-amino-acid chain: Extent of cell elongation protein 1 (282 aa).

Positions 1–18 (MKFSKVASFAFLALSSQA) are cleaved as a signal peptide. Residues 68 to 92 (ISFAGIVSSIINQLPSIIQIIGNII) traverse the membrane as a helical segment.

It localises to the secreted. It is found in the host cell membrane. Secreted protein cleaved by KEX2 in 8 similar peptides (ECE1-I to ECE1-VIII). Stimulates biofilm formation. In terms of biological role, acts as a cytolytic peptide toxin that directly damages host epithelial membranes, triggers a danger response signaling pathway and activates epithelial immunity. Probably acts similarly to cationic antimicrobial peptide toxins, inducing lesions after binding to target cell membranes and causing an inward current associated with calcium influx. This is Extent of cell elongation protein 1 from Candida tropicalis (strain ATCC MYA-3404 / T1) (Yeast).